A 552-amino-acid chain; its full sequence is Arginine--tRNA ligase (552 aa).

A 'HIGH' region motif is present at residues 123 to 133 (ANPTGPLTIGR).

Belongs to the class-I aminoacyl-tRNA synthetase family. In terms of assembly, monomer.

It localises to the cytoplasm. The catalysed reaction is tRNA(Arg) + L-arginine + ATP = L-arginyl-tRNA(Arg) + AMP + diphosphate. This is Arginine--tRNA ligase from Chlorobium luteolum (strain DSM 273 / BCRC 81028 / 2530) (Pelodictyon luteolum).